The sequence spans 752 residues: THO complex subunit HPR1 (752 aa).

The residue at position 234 (S234) is a Phosphoserine. Residues 648 to 752 (RKKRALEEEA…SNGSSTQDMK (105 aa)) are disordered. A compositionally biased stretch (basic and acidic residues) spans 692–702 (EISEENTKIKS). Residues 720–752 (PQNTTAQLENPKTEDNNAATSNISNGSSTQDMK) are compositionally biased toward polar residues.

As to quaternary structure, component of the THO complex, which is composed of HPR1, MFT1, THO2 and THP2. Together with SUB2, TEX1 and YRA1, THO forms the transcription/export (TREX) complex. THO associates with DNA and RNA in vitro.

The protein localises to the nucleus. Functionally, component the THO subcomplex of the TREX complex, which operates in coupling transcription elongation to mRNA export. The THO complex is recruited to transcribed genes and moves along the gene with the elongating polymerase during transcription. THO is important for stabilizing nascent RNA in the RNA polymerase II elongation complex by preventing formation of DNA:RNA hybrids behind the elongating polymerase. It functions in cotranscriptional formation of an export-competent messenger ribonucleoprotein particle (mRNP) by facilitating the loading of ATP-dependent RNA helicase SUB2 and the mRNA export factor YRA1 along the nascent mRNA. The chain is THO complex subunit HPR1 (HPR1) from Saccharomyces cerevisiae (strain ATCC 204508 / S288c) (Baker's yeast).